The primary structure comprises 132 residues: Small ribosomal subunit protein uS19 (132 aa).

This sequence belongs to the universal ribosomal protein uS19 family.

Functionally, protein S19 forms a complex with S13 that binds strongly to the 16S ribosomal RNA. The protein is Small ribosomal subunit protein uS19 of Korarchaeum cryptofilum (strain OPF8).